The primary structure comprises 216 residues: Thiosulfate dehydrogenase electron acceptor (216 aa).

Positions 1–22 are cleaved as a signal peptide; it reads MKSIHWPLAGVAALLLSMQAQA. 2 Cytochrome c domains span residues 23 to 108 and 118 to 210; these read ADGQ…EAMP and SEAA…ANVG. 6 residues coordinate heme c: Cys41, Cys44, His45, Cys141, Cys144, and His145.

In terms of processing, binds 2 heme c groups covalently per subunit.

Functionally, acts as an electron acceptor for the thiosulfate dehydrogenase TsdA. This chain is Thiosulfate dehydrogenase electron acceptor (tsdB), found in Stutzerimonas stutzeri (strain A1501) (Pseudomonas stutzeri).